A 184-amino-acid chain; its full sequence is Mediator of RNA polymerase II transcription subunit 28 (184 aa).

Positions 77 to 105 (LLKEENFDLKQEIARKDELIRKHYEKIES) form a coiled coil.

The protein belongs to the Mediator complex subunit 28 family. In terms of assembly, component of the Mediator complex.

It localises to the nucleus. In terms of biological role, component of the Mediator complex, a coactivator involved in the regulated transcription of nearly all RNA polymerase II-dependent genes. Mediator functions as a bridge to convey information from gene-specific regulatory proteins to the basal RNA polymerase II transcription machinery. Mediator is recruited to promoters by direct interactions with regulatory proteins and serves as a scaffold for the assembly of a functional preinitiation complex with RNA polymerase II and the general transcription factors. The polypeptide is Mediator of RNA polymerase II transcription subunit 28 (MED28) (Aedes aegypti (Yellowfever mosquito)).